The sequence spans 242 residues: DNA repair protein RecO (242 aa).

Belongs to the RecO family.

In terms of biological role, involved in DNA repair and RecF pathway recombination. The protein is DNA repair protein RecO of Laribacter hongkongensis (strain HLHK9).